The sequence spans 298 residues: Mimecan (298 aa).

A signal peptide spans 1 to 20 (MKTLQSTLLLLLFVPLIKPA). A glycan (N-linked (GlcNAc...) (keratan sulfate) asparagine) is linked at N88. 7 LRR repeats span residues 112-131 (DAVP…FNKI), 132-155 (KKLT…GNLI), 156-179 (EDIE…ENQL), 180-199 (LKLP…YNKI), 200-225 (KSRG…HNAL), 226-246 (ESVP…FNNI), and 247-277 (ASIT…GNPI). N-linked (GlcNAc...) (keratan sulfate) asparagine glycosylation occurs at N214. A disulfide bridge links C255 with C288. N258 is a glycosylation site (N-linked (GlcNAc...) (keratan sulfate) asparagine).

The protein belongs to the small leucine-rich proteoglycan (SLRP) family. SLRP class III subfamily. Post-translationally, contains keratan sulfate.

The protein localises to the secreted. It is found in the extracellular space. It localises to the extracellular matrix. Its function is as follows. Induces bone formation in conjunction with TGF-beta-1 or TGF-beta-2. This is Mimecan (OGN) from Pongo abelii (Sumatran orangutan).